The following is a 130-amino-acid chain: Ribosome biogenesis inhibitor MINAS-60 (130 aa).

The segment at 61–130 (SKVQRIPTRP…RRRRPVTSSC (70 aa)) is disordered. A compositionally biased stretch (basic residues) spans 109 to 130 (KGRRRRRRMRRRRRRRPVTSSC).

Interacts with 60S ribosome assembly factors GTPBP4 and MRTO4.

Its subcellular location is the nucleus. It localises to the nucleolus. Acts as a late-stage inhibitor of pre-60S ribosome assembly by preventing pre-60S ribosome export from nucleus. The chain is Ribosome biogenesis inhibitor MINAS-60 from Mus musculus (Mouse).